A 72-amino-acid chain; its full sequence is Translation initiation factor IF-1 (72 aa).

An S1-like domain is found at 1-72; that stretch reads MSKEEAIEVE…TRGRITYRAK (72 aa).

The protein belongs to the IF-1 family. In terms of assembly, component of the 30S ribosomal translation pre-initiation complex which assembles on the 30S ribosome in the order IF-2 and IF-3, IF-1 and N-formylmethionyl-tRNA(fMet); mRNA recruitment can occur at any time during PIC assembly.

The protein resides in the cytoplasm. Functionally, one of the essential components for the initiation of protein synthesis. Stabilizes the binding of IF-2 and IF-3 on the 30S subunit to which N-formylmethionyl-tRNA(fMet) subsequently binds. Helps modulate mRNA selection, yielding the 30S pre-initiation complex (PIC). Upon addition of the 50S ribosomal subunit IF-1, IF-2 and IF-3 are released leaving the mature 70S translation initiation complex. In Geobacter sulfurreducens (strain ATCC 51573 / DSM 12127 / PCA), this protein is Translation initiation factor IF-1.